The primary structure comprises 276 residues: MAWRALHPLLLLLLLFPGSQAQSKAQVLQSVAGQTLTVRCQYPPTGSLYEKKGWCKEASALVCIRLVTSSKPRTMAWTSRFTIWDDPDAGFFTVTMTDLREEDSGHYWCRIYRPSDNSVSKSVRFYLVVSPASASTQTSWTPRDLVSSQTQTQSCVPPTAGARQAPESPSTIPVPSQPQNSTLRPGPAAPIALVPVFCGLLVAKSLVLSALLVWWGDIWWKTMMELRSLDTQKATCHLQQVTDLPWTSVSSPVEREILYHTVARTKISDDDDEHTL.

A signal peptide spans 1 to 21; the sequence is MAWRALHPLLLLLLLFPGSQA. Residues 22 to 120 form the Ig-like domain; that stretch reads QSKAQVLQSV…IYRPSDNSVS (99 aa). Residues 22–192 lie on the Extracellular side of the membrane; sequence QSKAQVLQSV…LRPGPAAPIA (171 aa). Disulfide bonds link C40–C109 and C55–C63. Composition is skewed to polar residues over residues 138-156 and 167-183; these read TSWT…QSCV and ESPS…NSTL. Positions 138–184 are disordered; it reads TSWTPRDLVSSQTQTQSCVPPTAGARQAPESPSTIPVPSQPQNSTLR. The N-linked (GlcNAc...) asparagine glycan is linked to N180. The helical transmembrane segment at 193–213 threads the bilayer; the sequence is LVPVFCGLLVAKSLVLSALLV. Residues 214-276 lie on the Cytoplasmic side of the membrane; sequence WWGDIWWKTM…ISDDDDEHTL (63 aa).

This sequence belongs to the natural cytotoxicity receptor (NCR) family. As to quaternary structure, interacts with TYROBP/DAP12. Interacts with KMT2E isoform NKp44L. In terms of tissue distribution, selectively expressed by activated NK cells and by in vitro cultured (i.e. activated) TCRg/d lymphoid cells.

The protein localises to the cell membrane. Functionally, cytotoxicity-activating receptor that may contribute to the increased efficiency of activated natural killer (NK) cells to mediate tumor cell lysis. In Homo sapiens (Human), this protein is Natural cytotoxicity triggering receptor 2 (NCR2).